We begin with the raw amino-acid sequence, 416 residues long: D-amino acid dehydrogenase (416 aa).

3–17 (VTILGAGVIGVTTAY) provides a ligand contact to FAD.

It belongs to the DadA oxidoreductase family. FAD is required as a cofactor.

It catalyses the reaction a D-alpha-amino acid + A + H2O = a 2-oxocarboxylate + AH2 + NH4(+). It participates in amino-acid degradation; D-alanine degradation; NH(3) and pyruvate from D-alanine: step 1/1. Functionally, oxidative deamination of D-amino acids. The sequence is that of D-amino acid dehydrogenase from Rhizobium rhizogenes (strain K84 / ATCC BAA-868) (Agrobacterium radiobacter).